Here is an 821-residue protein sequence, read N- to C-terminus: MEMPGRRSNYTLLSQFSDDQVSVSVTGAPPPHYDSLSSENRSNHNSGNTGKAKAERGGFDWDPSGGGGGDHRLNNQPNRVGNNMYASSLGLQRQSSGSSFGESSLSGDYYMPTLSAAANEIESVGFPQDDGFRLGFGGGGGDLRIQMAADSAGGSSSGKSWAQQTEESYQLQLALALRLSSEATCADDPNFLDPVPDESALRTSPSSAETVSHRFWVNGCLSYYDKVPDGFYMMNGLDPYIWTLCIDLHESGRIPSIESLRAVDSGVDSSLEAIIVDRRSDPAFKELHNRVHDISCSCITTKEVVDQLAKLICNRMGGPVIMGEDELVPMWKECIDGLKEIFKVVVPIGSLSVGLCRHRALLFKVLADIIDLPCRIAKGCKYCNRDDAASCLVRFGLDREYLVDLVGKPGHLWEPDSLLNGPSSISISSPLRFPRPKPVEPAVDFRLLAKQYFSDSQSLNLVFDPASDDMGFSMFHRQYDNPGGENDALAENGGGSLPPSANMPPQNMMRASNQIEAAPMNAPPISQPVPNRANRELGLDGDDMDIPWCDLNIKEKIGAGSFGTVHRAEWHGSDVAVKILMEQDFHAERVNEFLREVAIMKRLRHPNIVLFMGAVTQPPNLSIVTEYLSRGSLYRLLHKSGAREQLDERRRLSMAYDVAKGMNYLHNRNPPIVHRDLKSPNLLVDKKYTVKVCDFGLSRLKASTFLSSKSAAGTPEWMAPEVLRDEPSNEKSDVYSFGVILWELATLQQPWGNLNPAQVVAAVGFKCKRLEIPRNLNPQVAAIIEGCWTNEPWKRPSFATIMDLLRPLIKSAVPPPNRSDL.

Disordered regions lie at residues 1–76 (MEMP…LNNQ) and 481–502 (NPGG…PSAN). Residues 14–25 (SQFSDDQVSVSV) are compositionally biased toward low complexity. Positions 35–49 (SLSSENRSNHNSGNT) are enriched in polar residues. The Protein kinase domain maps to 551–809 (LNIKEKIGAG…TIMDLLRPLI (259 aa)). Residues 557-565 (IGAGSFGTV) and Lys-578 contribute to the ATP site. Catalysis depends on Asp-676, which acts as the Proton acceptor.

This sequence belongs to the protein kinase superfamily. TKL Ser/Thr protein kinase family. RAF subfamily. In terms of assembly, interacts with EIN2 (via C-terminus). Expressed in both seedlings and adult plants.

It catalyses the reaction L-seryl-[protein] + ATP = O-phospho-L-seryl-[protein] + ADP + H(+). The catalysed reaction is L-threonyl-[protein] + ATP = O-phospho-L-threonyl-[protein] + ADP + H(+). Kinase activity is inhibited by C24:1-ceramide during hypoxia (e.g. submergences). Its function is as follows. Acts as a negative regulator in the ethylene response pathway. Phosphorylates the cytosolic C-terminal domain of EIN2, preventing the signaling in the absence of ethylene. Interacts with C24:1-ceramide upon hypoxic conditions (e.g. submergences) to in turn regulate EIN2 endoplasmic reticulum (ER)-to-nucleus translocation and EIN3 stabilization. This is Serine/threonine-protein kinase CTR1 from Arabidopsis thaliana (Mouse-ear cress).